The sequence spans 153 residues: MDQEAVGNVVLLAIVTLISVVQNGFFAHKVEHESRNQNGRSFQRTGTLAFERVYTANQNCVDAYPTFLAVLWTAGLLCSQVPAAFAGLMYLFVRQKYFVGYLGERTQSTPGYIFGKRIILFLFLMSLAGILNYCLILLFGSDFENYIKTISTT.

Residues 1 to 8 (MDQEAVGN) lie on the Lumenal side of the membrane. A helical transmembrane segment spans residues 9–30 (VVLLAIVTLISVVQNGFFAHKV). Topologically, residues 31 to 52 (EHESRNQNGRSFQRTGTLAFER) are cytoplasmic. The chain crosses the membrane as a helical span at residues 53-77 (VYTANQNCVDAYPTFLAVLWTAGLL). Over 78–80 (CSQ) the chain is Lumenal. Residues 81-102 (VPAAFAGLMYLFVRQKYFVGYL) traverse the membrane as a helical segment. The Cytoplasmic portion of the chain corresponds to 103–107 (GERTQ). An intramembrane segment occupies 108–115 (STPGYIFG). A helical transmembrane segment spans residues 116-128 (KRIILFLFLMSLA). The Lumenal segment spans residues 129-153 (GILNYCLILLFGSDFENYIKTISTT).

Belongs to the MAPEG family. In terms of assembly, homotrimer. Interacts with LTC4S and ALOX5.

It is found in the nucleus membrane. It localises to the endoplasmic reticulum membrane. Required for leukotriene biosynthesis by ALOX5 (5-lipoxygenase). Anchors ALOX5 to the membrane. Binds arachidonic acid, and could play an essential role in the transfer of arachidonic acid to ALOX5. Binds to MK-886, a compound that blocks the biosynthesis of leukotrienes. This chain is Arachidonate 5-lipoxygenase-activating protein (ALOX5AP), found in Oryctolagus cuniculus (Rabbit).